The chain runs to 418 residues: Glutamyl-tRNA reductase (418 aa).

Substrate is bound by residues 49 to 52, Ser-109, 114 to 116, and Gln-120; these read TCNR and EPQ. Cys-50 functions as the Nucleophile in the catalytic mechanism. Residue 189–194 participates in NADP(+) binding; sequence GAGETI.

This sequence belongs to the glutamyl-tRNA reductase family. As to quaternary structure, homodimer.

The catalysed reaction is (S)-4-amino-5-oxopentanoate + tRNA(Glu) + NADP(+) = L-glutamyl-tRNA(Glu) + NADPH + H(+). It participates in porphyrin-containing compound metabolism; protoporphyrin-IX biosynthesis; 5-aminolevulinate from L-glutamyl-tRNA(Glu): step 1/2. Its function is as follows. Catalyzes the NADPH-dependent reduction of glutamyl-tRNA(Glu) to glutamate 1-semialdehyde (GSA). This Escherichia coli O157:H7 protein is Glutamyl-tRNA reductase.